Here is a 307-residue protein sequence, read N- to C-terminus: Pseudouridine-5'-phosphate glycosidase (307 aa).

Catalysis depends on Glu-28, which acts as the Proton donor. Substrate-binding residues include Lys-89 and Val-109. Residue Asp-141 participates in Mn(2+) binding. 143–145 (SAD) contacts substrate. Lys-162 functions as the Nucleophile in the catalytic mechanism.

This sequence belongs to the pseudouridine-5'-phosphate glycosidase family. In terms of assembly, homotrimer. Requires Mn(2+) as cofactor.

The enzyme catalyses D-ribose 5-phosphate + uracil = psi-UMP + H2O. In terms of biological role, catalyzes the reversible cleavage of pseudouridine 5'-phosphate (PsiMP) to ribose 5-phosphate and uracil. Functions biologically in the cleavage direction, as part of a pseudouridine degradation pathway. This is Pseudouridine-5'-phosphate glycosidase from Staphylococcus aureus (strain MW2).